The primary structure comprises 65 residues: Large ribosomal subunit protein bL35 (65 aa).

A disordered region spans residues 1-28 (MPKIKTNRGAAKRFRKTGSGKIRRNKAF). The segment covering 10-26 (AAKRFRKTGSGKIRRNK) has biased composition (basic residues).

The protein belongs to the bacterial ribosomal protein bL35 family.

The protein is Large ribosomal subunit protein bL35 of Syntrophotalea carbinolica (strain DSM 2380 / NBRC 103641 / GraBd1) (Pelobacter carbinolicus).